Reading from the N-terminus, the 449-residue chain is Hyaluronidase (449 aa).

Positions 1-23 are cleaved as a signal peptide; it reads MYHLWIKCLAAWIFLKRFNGVHV. Intrachain disulfides connect Cys-47/Cys-340 and Cys-211/Cys-227. Residues Asn-67 and Asn-103 are each glycosylated (N-linked (GlcNAc...) asparagine). Glu-135 acts as the Proton donor in catalysis. N-linked (GlcNAc...) asparagine glycosylation is present at Asn-153. Asn-357 carries N-linked (GlcNAc...) asparagine glycosylation. 3 disulfide bridges follow: Cys-365–Cys-376, Cys-370–Cys-427, and Cys-429–Cys-438. N-linked (GlcNAc...) asparagine glycosylation occurs at Asn-401. One can recognise an EGF-like domain in the interval 427–438; that stretch reads CQCYQGWQGLYC.

Belongs to the glycosyl hydrolase 56 family. As to quaternary structure, monomer. Expressed by the venom gland.

It is found in the secreted. The enzyme catalyses Random hydrolysis of (1-&gt;4)-linkages between N-acetyl-beta-D-glucosamine and D-glucuronate residues in hyaluronate.. In terms of biological role, snake venom endo-hyaluronidase that degrades hyaluronan to smaller oligosaccharide fragments. In venom, it is not toxic by itself, but increases the diffusion of other venom proteins by degrading the extracellular matrix. In addition, it displays antiedematogenic activity. The protein is Hyaluronidase of Echis ocellatus (Ocellated saw-scaled viper).